Reading from the N-terminus, the 196-residue chain is Zinc metalloproteinase-disintegrin-like bothrojarin-3 (196 aa).

The Disintegrin domain occupies 2 to 88 (PPVCGTELLE…DCPTDDIQRN (87 aa)). Ca(2+) is bound by residues valine 4, leucine 9, glutamate 11, glutamate 14, and aspartate 17. Cystine bridges form between cysteine 5/cysteine 34, cysteine 16/cysteine 29, cysteine 18/cysteine 24, cysteine 28/cysteine 51, cysteine 42/cysteine 48, cysteine 47/cysteine 73, cysteine 60/cysteine 80, cysteine 67/cysteine 99, cysteine 92/cysteine 104, cysteine 111/cysteine 161, cysteine 126/cysteine 168, cysteine 139/cysteine 149, and cysteine 156/cysteine 193. Residues 66–68 (ECD) carry the D/ECD-tripeptide motif.

It belongs to the venom metalloproteinase (M12B) family. P-III subfamily. P-IIIa sub-subfamily. In terms of assembly, monomer. Zn(2+) is required as a cofactor. In terms of processing, glycosylated. As to expression, expressed by the venom gland.

The protein resides in the secreted. The hemorrhagic metalloproteinase-disintegrin-like bothrojarin-1 is a potent inhibitor of collagen-induced platelet aggregation by blockage of alpha-2/beta-1 (ITGA2/ITGB1) integrin. It does not present any fibrinogen-clotting activity. This chain is Zinc metalloproteinase-disintegrin-like bothrojarin-3, found in Bothrops jararaca (Jararaca).